Reading from the N-terminus, the 303-residue chain is Mitochondrial substrate carrier family protein E (303 aa).

Residues 1-8 (MENKKESS) lie on the Mitochondrial intermembrane side of the membrane. Solcar repeat units lie at residues 6-93 (ESSL…SKQW), 104-197 (ESTI…CKST), and 210-298 (LPIP…LKYL). The chain crosses the membrane as a helical span at residues 9 to 29 (LLYILTGATSGLLADSIMHPV). The Mitochondrial matrix portion of the chain corresponds to 30 to 67 (DTVRARVQIEKVGKSQYKGTFNALNQIIKNEGVSYLYK). The helical transmembrane segment at 68 to 88 (GFPIVATATVPAHALYFLGYE) threads the bilayer. At 89 to 109 (YSKQWVTDRYGKKWGESTITH) the chain is on the mitochondrial intermembrane side. Residues 110-130 (FSAGFVADALGSLIWVPMDII) form a helical membrane-spanning segment. Topologically, residues 131-171 (KQRLQVQTNTQKLNPNQTYYKGSFHAGKIILQEEGIRGLYR) are mitochondrial matrix. The helical transmembrane segment at 172 to 192 (GFMPALATYGPFVGIYFSVYE) threads the bilayer. Over 193–215 (KCKSTISSLLSKEKDQYLPIPYQ) the chain is Mitochondrial intermembrane. The chain crosses the membrane as a helical span at residues 216–236 (LGSGFFAGAFAAAVTCPLDVI). Residues 237 to 268 (KTRIQVQRSTEKQIYKGMWDSFKTILKEEGPK) are Mitochondrial matrix-facing. A helical transmembrane segment spans residues 269–289 (AFVKGMGARIWWIAPGNALTI). The Mitochondrial intermembrane segment spans residues 290 to 303 (ASYEQLKYLFKDLI).

It belongs to the mitochondrial carrier (TC 2.A.29) family.

The protein resides in the mitochondrion inner membrane. Functionally, mitochondrial solute carriers shuttle metabolites, nucleotides, and cofactors through the mitochondrial inner membrane. This chain is Mitochondrial substrate carrier family protein E (mcfE), found in Dictyostelium discoideum (Social amoeba).